The following is a 256-amino-acid chain: Thiazole synthase (256 aa).

The Schiff-base intermediate with DXP role is filled by Lys-95. Residues Gly-156, Ala-182–Gly-183, and Asn-204–Thr-205 contribute to the 1-deoxy-D-xylulose 5-phosphate site.

Belongs to the ThiG family. In terms of assembly, homotetramer. Forms heterodimers with either ThiH or ThiS.

The protein localises to the cytoplasm. It catalyses the reaction [ThiS sulfur-carrier protein]-C-terminal-Gly-aminoethanethioate + 2-iminoacetate + 1-deoxy-D-xylulose 5-phosphate = [ThiS sulfur-carrier protein]-C-terminal Gly-Gly + 2-[(2R,5Z)-2-carboxy-4-methylthiazol-5(2H)-ylidene]ethyl phosphate + 2 H2O + H(+). It functions in the pathway cofactor biosynthesis; thiamine diphosphate biosynthesis. In terms of biological role, catalyzes the rearrangement of 1-deoxy-D-xylulose 5-phosphate (DXP) to produce the thiazole phosphate moiety of thiamine. Sulfur is provided by the thiocarboxylate moiety of the carrier protein ThiS. In vitro, sulfur can be provided by H(2)S. This Klebsiella pneumoniae subsp. pneumoniae (strain ATCC 700721 / MGH 78578) protein is Thiazole synthase.